A 213-amino-acid polypeptide reads, in one-letter code: LexA repressor 2 (213 aa).

The H-T-H motif DNA-binding region spans 27-47; sequence QTEIARAFGFKGVRAAQYHLE. Catalysis depends on for autocatalytic cleavage activity residues S133 and K170.

This sequence belongs to the peptidase S24 family. Homodimer.

The catalysed reaction is Hydrolysis of Ala-|-Gly bond in repressor LexA.. In terms of biological role, represses a number of genes involved in the response to DNA damage (SOS response), including recA and lexA. In the presence of single-stranded DNA, RecA interacts with LexA causing an autocatalytic cleavage which disrupts the DNA-binding part of LexA, leading to derepression of the SOS regulon and eventually DNA repair. This Xanthomonas campestris pv. campestris (strain ATCC 33913 / DSM 3586 / NCPPB 528 / LMG 568 / P 25) protein is LexA repressor 2.